The chain runs to 107 residues: Iron-binding protein IscA (107 aa).

Fe cation-binding residues include C35, C99, and C101.

Belongs to the HesB/IscA family. Homodimer; may form tetramers and higher multimers. Fe cation is required as a cofactor.

Functionally, is able to transfer iron-sulfur clusters to apo-ferredoxin. Multiple cycles of [2Fe2S] cluster formation and transfer are observed, suggesting that IscA acts catalytically. Recruits intracellular free iron so as to provide iron for the assembly of transient iron-sulfur cluster in IscU in the presence of IscS, L-cysteine and the thioredoxin reductase system TrxA/TrxB. This chain is Iron-binding protein IscA, found in Salmonella newport (strain SL254).